The primary structure comprises 284 residues: Bifunctional protein FolD (284 aa).

Residues 166–168 (GAS) and isoleucine 232 contribute to the NADP(+) site.

The protein belongs to the tetrahydrofolate dehydrogenase/cyclohydrolase family. As to quaternary structure, homodimer.

The enzyme catalyses (6R)-5,10-methylene-5,6,7,8-tetrahydrofolate + NADP(+) = (6R)-5,10-methenyltetrahydrofolate + NADPH. It carries out the reaction (6R)-5,10-methenyltetrahydrofolate + H2O = (6R)-10-formyltetrahydrofolate + H(+). It participates in one-carbon metabolism; tetrahydrofolate interconversion. Its function is as follows. Catalyzes the oxidation of 5,10-methylenetetrahydrofolate to 5,10-methenyltetrahydrofolate and then the hydrolysis of 5,10-methenyltetrahydrofolate to 10-formyltetrahydrofolate. The chain is Bifunctional protein FolD from Shewanella baltica (strain OS195).